The primary structure comprises 109 residues: Nucleoid-associated protein Bcer98_0019 (109 aa).

Belongs to the YbaB/EbfC family. Homodimer.

It localises to the cytoplasm. The protein localises to the nucleoid. Its function is as follows. Binds to DNA and alters its conformation. May be involved in regulation of gene expression, nucleoid organization and DNA protection. In Bacillus cytotoxicus (strain DSM 22905 / CIP 110041 / 391-98 / NVH 391-98), this protein is Nucleoid-associated protein Bcer98_0019.